Here is a 118-residue protein sequence, read N- to C-terminus: Small ribosomal subunit protein uS13 (118 aa).

Residues 92-118 (RRGLPVRGQRTKTNARTRKGPRKPIKK) form a disordered region.

It belongs to the universal ribosomal protein uS13 family. As to quaternary structure, part of the 30S ribosomal subunit. Forms a loose heterodimer with protein S19. Forms two bridges to the 50S subunit in the 70S ribosome.

Its function is as follows. Located at the top of the head of the 30S subunit, it contacts several helices of the 16S rRNA. In the 70S ribosome it contacts the 23S rRNA (bridge B1a) and protein L5 of the 50S subunit (bridge B1b), connecting the 2 subunits; these bridges are implicated in subunit movement. Contacts the tRNAs in the A and P-sites. The sequence is that of Small ribosomal subunit protein uS13 from Yersinia enterocolitica serotype O:8 / biotype 1B (strain NCTC 13174 / 8081).